We begin with the raw amino-acid sequence, 647 residues long: Phosphomethylpyrimidine synthase (647 aa).

Residues N235, M264, Y293, H329, 349 to 351 (SRG), 390 to 393 (DGLR), and E429 contribute to the substrate site. H433 contacts Zn(2+). Y456 is a binding site for substrate. H497 serves as a coordination point for Zn(2+). [4Fe-4S] cluster contacts are provided by C577, C580, and C585. Residues 623 to 647 (KSAEFKASGSELYHPAVSHEEVAEG) are disordered.

The protein belongs to the ThiC family. As to quaternary structure, homodimer. Requires [4Fe-4S] cluster as cofactor.

The enzyme catalyses 5-amino-1-(5-phospho-beta-D-ribosyl)imidazole + S-adenosyl-L-methionine = 4-amino-2-methyl-5-(phosphooxymethyl)pyrimidine + CO + 5'-deoxyadenosine + formate + L-methionine + 3 H(+). Its pathway is cofactor biosynthesis; thiamine diphosphate biosynthesis. Catalyzes the synthesis of the hydroxymethylpyrimidine phosphate (HMP-P) moiety of thiamine from aminoimidazole ribotide (AIR) in a radical S-adenosyl-L-methionine (SAM)-dependent reaction. The polypeptide is Phosphomethylpyrimidine synthase (Vibrio vulnificus (strain CMCP6)).